The primary structure comprises 196 residues: MSRYRGPRLKKIRRLGALPGLTRKTPKSGSNLKKKFHSGKKEQYRIRLQEKQKLRFHYGLTERQLLRYVHIAGKAKRSTGQVLLQLLEMRLDNILFRLGMASTIPGARQLVNHRHILVNGRIVNIPSFRCKPRDIITTKDNQRSKGLVQTLMASSDPGKLPKHLTIDTLEYKGLVNKILDRKWVGLKINELLVVEY.

Residues 17–36 are disordered; it reads ALPGLTRKTPKSGSNLKKKF. The 81-residue stretch at 89 to 169 folds into the S4 RNA-binding domain; it reads MRLDNILFRL…LPKHLTIDTL (81 aa).

Belongs to the universal ribosomal protein uS4 family. As to quaternary structure, part of the 30S ribosomal subunit. Contacts protein S5. The interaction surface between S4 and S5 is involved in control of translational fidelity.

The protein localises to the plastid. The protein resides in the chloroplast. One of the primary rRNA binding proteins, it binds directly to 16S rRNA where it nucleates assembly of the body of the 30S subunit. In terms of biological role, with S5 and S12 plays an important role in translational accuracy. The sequence is that of Small ribosomal subunit protein uS4c (rps4) from Festuca gigantea (Giant fescue).